Reading from the N-terminus, the 2036-residue chain is Bikaverin polyketide synthase bik1 (2036 aa).

Residues 8-242 (YVFGDQSTPV…YPAPIYGPYH (235 aa)) are N-terminal acylcarrier protein transacylase domain (SAT). The Ketosynthase family 3 (KS3) domain maps to 370–801 (ENKIAIIGFS…GGNTSLLLED (432 aa)). Residues C541, H676, and H718 each act as for beta-ketoacyl synthase activity in the active site. The interval 908–1209 (FLFTGQGAQE…LASLRRKEDH (302 aa)) is acyl/malonyl transferases. Residue S997 is the For acyl/malonyl transferase activity of the active site. The tract at residues 1293 to 1425 (HNVIEQVHGD…CDVAVENPSS (133 aa)) is N-terminal hotdog fold. The PKS/mFAS DH domain maps to 1293-1600 (HNVIEQVHGD…FKKVARKVLE (308 aa)). Residues 1295-1599 (VIEQVHGDKR…TFKKVARKVL (305 aa)) form a product template (PT) domain region. H1325 acts as the Proton acceptor; for dehydratase activity in catalysis. Residues 1452–1600 (SAHMMRRGLL…FKKVARKVLE (149 aa)) are C-terminal hotdog fold. D1511 functions as the Proton donor; for dehydratase activity in the catalytic mechanism. A disordered region spans residues 1628-1654 (VLTPPSTTSHSVGTTSPPEPTESPVGS). A compositionally biased stretch (low complexity) spans 1638–1654 (SVGTTSPPEPTESPVGS). A Carrier domain is found at 1653 to 1730 (GSASGLIQKA…DLKSFLGAND (78 aa)). Residue S1690 is modified to O-(pantetheine 4'-phosphoryl)serine. The interval 1733 to 1758 (FSSSNSEAESSASSAASTSPSDHGDD) is disordered. The span at 1734–1753 (SSSNSEAESSASSAASTSPS) shows a compositional bias: low complexity. Residue S1857 is the For thioesterase activity of the active site.

Its pathway is secondary metabolite biosynthesis. Polyketide synthase; part of the gene cluster that mediates the biosynthesis of bikaverin, a red pigment also considered as a mycotoxin. The first stage is catalyzed by the polyketide synthase bik1, which catalyzes the formation of the intermediate SMA76a also knowm as pre-bikaverin. FAD-dependent monooxygenase bik2 might then be responsible for the oxidation of pre-bikaverin to oxo-pre-bikaverin which is in turn methylated by the O-methyltransferase bik3 to me-oxo-pre-bikaverin. A further cycle of oxydation and methylation by bik2 and bik3 leads to the final product of bikaverin, via a nor-bikaverin intermediate. The polypeptide is Bikaverin polyketide synthase bik1 (Gibberella fujikuroi (strain CBS 195.34 / IMI 58289 / NRRL A-6831) (Bakanae and foot rot disease fungus)).